The chain runs to 957 residues: Protein translocase subunit SecA (957 aa).

ATP-binding positions include glutamine 87, 105 to 109 (GEGKT), and aspartate 512. The disordered stretch occupies residues 924–957 (AAPAQAPSKSKRSAGRNDPCPCGSGQKYKKCCGK). The Zn(2+) site is built by cysteine 943, cysteine 945, cysteine 954, and cysteine 955.

The protein belongs to the SecA family. Monomer and homodimer. Part of the essential Sec protein translocation apparatus which comprises SecA, SecYEG and auxiliary proteins SecDF-YajC and YidC. The cofactor is Zn(2+).

The protein localises to the cell inner membrane. It is found in the cytoplasm. The enzyme catalyses ATP + H2O + cellular proteinSide 1 = ADP + phosphate + cellular proteinSide 2.. Functionally, part of the Sec protein translocase complex. Interacts with the SecYEG preprotein conducting channel. Has a central role in coupling the hydrolysis of ATP to the transfer of proteins into and across the cell membrane, serving as an ATP-driven molecular motor driving the stepwise translocation of polypeptide chains across the membrane. This chain is Protein translocase subunit SecA, found in Geobacter sp. (strain M21).